Consider the following 473-residue polypeptide: Probable glycine dehydrogenase (decarboxylating) subunit 2 (473 aa).

Residue K266 is modified to N6-(pyridoxal phosphate)lysine.

This sequence belongs to the GcvP family. C-terminal subunit subfamily. The glycine cleavage system is composed of four proteins: P, T, L and H. In this organism, the P 'protein' is a heterodimer of two subunits. Requires pyridoxal 5'-phosphate as cofactor.

The enzyme catalyses N(6)-[(R)-lipoyl]-L-lysyl-[glycine-cleavage complex H protein] + glycine + H(+) = N(6)-[(R)-S(8)-aminomethyldihydrolipoyl]-L-lysyl-[glycine-cleavage complex H protein] + CO2. Functionally, the glycine cleavage system catalyzes the degradation of glycine. The P protein binds the alpha-amino group of glycine through its pyridoxal phosphate cofactor; CO(2) is released and the remaining methylamine moiety is then transferred to the lipoamide cofactor of the H protein. This chain is Probable glycine dehydrogenase (decarboxylating) subunit 2, found in Thermus thermophilus (strain ATCC BAA-163 / DSM 7039 / HB27).